The sequence spans 348 residues: Pheromone P-factor receptor (348 aa).

Transmembrane regions (helical) follow at residues 46 to 69, 79 to 103, 125 to 141, 162 to 180, 207 to 225, 249 to 267, and 283 to 301; these read LLTG…VCLL, VFVF…TICS, VFNI…IFTA, IMTV…FWIT, YFIA…SGVF, CILV…FTII, and CLLI…STAL.

It belongs to the G-protein coupled receptor 4 family.

The protein localises to the membrane. Receptor for the peptide pheromone P-factor, a mating factor of S.pombe. Pheromone signaling is essential for initiation of meiosis in S.pombe; P-factor signaling alone may be sufficient. The protein is Pheromone P-factor receptor (mam2) of Schizosaccharomyces pombe (strain 972 / ATCC 24843) (Fission yeast).